A 244-amino-acid chain; its full sequence is Ribonuclease HII (244 aa).

The 192-residue stretch at 31–222 (RLIAGVDEAG…VRLALQGREG (192 aa)) folds into the RNase H type-2 domain. The a divalent metal cation site is built by aspartate 37, glutamate 38, and aspartate 130.

This sequence belongs to the RNase HII family. Requires Mn(2+) as cofactor. Mg(2+) serves as cofactor.

Its subcellular location is the cytoplasm. The enzyme catalyses Endonucleolytic cleavage to 5'-phosphomonoester.. In terms of biological role, endonuclease that specifically degrades the RNA of RNA-DNA hybrids. This chain is Ribonuclease HII, found in Xanthomonas axonopodis pv. citri (strain 306).